Here is a 1042-residue protein sequence, read N- to C-terminus: Serine/threonine-protein kinase LATS2 (1042 aa).

Residues 23-44 form a disordered region; that stretch reads REGLKQPSKASTQGLLVGPNSD. Over residues 30-44 the composition is skewed to polar residues; the sequence is SKASTQGLLVGPNSD. Serine 82 carries the post-translational modification Phosphoserine; by AURKA. The region spanning 97–138 is the UBA domain; the sequence is EVNRQMLQELVNAGCDQEMAGRALKQTGSRSIEAALEYISKM. The tract at residues 100–140 is interaction with ubiquitinated AMOTL2; the sequence is RQMLQELVNAGCDQEMAGRALKQTGSRSIEAALEYISKMGY. Residues 237 to 282 form a disordered region; it reads HFPGTHYGRGHLLSEQPGYGVQRSSSFQNKTPPDAYSSMAKAQGGP. Polar residues predominate over residues 258-267; the sequence is QRSSSFQNKT. At threonine 267 the chain carries Phosphothreonine. Residue serine 362 is modified to Phosphoserine. Disordered stretches follow at residues 378–399, 442–481, and 501–550; these read RAGP…LPAP, PATE…HLLL, and QSLR…KRES. Positions 472–475 match the PPxY motif motif; that stretch reads PPPY. Positions 507-530 are enriched in basic and acidic residues; it reads TEQDRSDKSHKGAKGDKAGRDKKQ. Position 534 is a phosphoserine (serine 534). A compositionally biased stretch (basic and acidic residues) spans 541-550; sequence NSRDEEKRES. The 306-residue stretch at 626-931 folds into the Protein kinase domain; that stretch reads FVKIKTLGIG…ADDLKAHPFF (306 aa). ATP contacts are provided by residues 632 to 640 and lysine 655; that span reads LGIGAFGEV. Aspartate 749 (proton acceptor) is an active-site residue. Residues 932–1010 form the AGC-kinase C-terminal domain; the sequence is NTIDFSRDIR…RRFFDDNGYP (79 aa). Residue threonine 999 is modified to Phosphothreonine. The tract at residues 1014 to 1042 is disordered; that stretch reads PKPSEPAESADPGDADLEGAAEGCQPVYV.

This sequence belongs to the protein kinase superfamily. AGC Ser/Thr protein kinase family. In terms of assembly, interacts with and is phosphorylated by AURKA. Binds to AR. Interacts with AJUBA during mitosis and this complex regulates organization of the spindle apparatus through recruitment of gamma-tubulin to the centrosome. Interacts (via PPxY motif) with YAP1 (via WW domains). Interacts with MOB1A and MOB1B. Interacts with LIMD1, WTIP and AJUBA. Interacts with SNAI1. Interacts with WWC1, WWC2 and WWC3 (via their WW domains). Interacts (via UBA domain) with ubiquitinated AMOTL2; the interaction promotes LATS2 phosphorylation of YAP1. Mg(2+) serves as cofactor. Autophosphorylated and phosphorylated during M-phase and the G1/S-phase of the cell cycle. Phosphorylated and activated by STK3/MST2. Phosphorylated by MAP4Ks; in parallel to STK3/MST2 and resulting to its activation. Phosphorylation by NUAK2 may regulate its activity in phosphorylation and inactivation YAP1. As to expression, expressed at high levels in ovary and testis and at lower levels in all other tissues examined.

It localises to the cytoplasm. Its subcellular location is the cytoskeleton. It is found in the microtubule organizing center. The protein resides in the centrosome. The protein localises to the spindle pole. It localises to the nucleus. The enzyme catalyses L-seryl-[protein] + ATP = O-phospho-L-seryl-[protein] + ADP + H(+). It catalyses the reaction L-threonyl-[protein] + ATP = O-phospho-L-threonyl-[protein] + ADP + H(+). Negative regulator of YAP1 in the Hippo signaling pathway that plays a pivotal role in organ size control and tumor suppression by restricting proliferation and promoting apoptosis. The core of this pathway is composed of a kinase cascade wherein STK3/MST2 and STK4/MST1, in complex with its regulatory protein SAV1, phosphorylates and activates LATS1/2 in complex with its regulatory protein MOB1, which in turn phosphorylates and inactivates YAP1 oncoprotein and WWTR1/TAZ. Phosphorylation of YAP1 by LATS2 inhibits its translocation into the nucleus to regulate cellular genes important for cell proliferation, cell death, and cell migration. Also phosphorylates YAP1 in response to cell contact inhibition-driven WWP1 ubiquitination of AMOTL2, which results in LATS2 activation. Acts as a tumor suppressor which plays a critical role in centrosome duplication, maintenance of mitotic fidelity and genomic stability. Negatively regulates G1/S transition by down-regulating cyclin E/CDK2 kinase activity. Negative regulator of the androgen receptor. Phosphorylates SNAI1 in the nucleus leading to its nuclear retention and stabilization, which enhances its epithelial-mesenchymal transition and tumor cell invasion/migration activities. This tumor-promoting activity is independent of its effects upon YAP1 or WWTR1/TAZ. Acts as an activator of the NLRP3 inflammasome by mediating phosphorylation of 'Ser-265' of NLRP3 following NLRP3 palmitoylation, promoting NLRP3 activation by NEK7. The polypeptide is Serine/threonine-protein kinase LATS2 (Mus musculus (Mouse)).